A 362-amino-acid polypeptide reads, in one-letter code: 3-dehydroquinate synthase (362 aa).

NAD(+)-binding positions include 73-78, 107-111, 131-132, K144, K153, and 171-174; these read DAEAGK, GAATD, TT, and TLQT. Residues E186, H249, and H265 each coordinate Zn(2+).

It belongs to the sugar phosphate cyclases superfamily. Dehydroquinate synthase family. The cofactor is NAD(+). Requires Co(2+) as cofactor. Zn(2+) is required as a cofactor.

The protein localises to the cytoplasm. The enzyme catalyses 7-phospho-2-dehydro-3-deoxy-D-arabino-heptonate = 3-dehydroquinate + phosphate. Its pathway is metabolic intermediate biosynthesis; chorismate biosynthesis; chorismate from D-erythrose 4-phosphate and phosphoenolpyruvate: step 2/7. Its function is as follows. Catalyzes the conversion of 3-deoxy-D-arabino-heptulosonate 7-phosphate (DAHP) to dehydroquinate (DHQ). This chain is 3-dehydroquinate synthase, found in Mycobacterium bovis (strain ATCC BAA-935 / AF2122/97).